A 739-amino-acid polypeptide reads, in one-letter code: Pre-mRNA-splicing factor ATP-dependent RNA helicase ddx-15 (739 aa).

Positions 1 to 19 (MSSRHRLDLDGSGRGDRRR) are enriched in basic and acidic residues. The interval 1-49 (MSSRHRLDLDGSGRGDRRRSPNRRSRSRSRSPHRRSSPDRKRQIGAVGN) is disordered. Positions 20–35 (SPNRRSRSRSRSPHRR) are enriched in basic residues. A Helicase ATP-binding domain is found at 86–257 (MELLRNNQCI…FEDCPLLSVP (172 aa)). Residue 99 to 106 (GETGSGKT) participates in ATP binding. The DEAH box signature appears at 204-207 (DEAH). Residues 282-462 (TVIQIHMVEE…SVVLQLKKLG (181 aa)) enclose the Helicase C-terminal domain.

Belongs to the DEAD box helicase family. DEAH subfamily. DDX15/PRP43 sub-subfamily.

It localises to the nucleus. It catalyses the reaction ATP + H2O = ADP + phosphate + H(+). Functionally, pre-mRNA processing factor involved in disassembly of spliceosomes after the release of mature mRNA. The chain is Pre-mRNA-splicing factor ATP-dependent RNA helicase ddx-15 from Caenorhabditis elegans.